The primary structure comprises 207 residues: Uridine kinase (207 aa).

11-18 (GGSGSGKT) is a binding site for ATP.

Belongs to the uridine kinase family.

It is found in the cytoplasm. The enzyme catalyses uridine + ATP = UMP + ADP + H(+). It catalyses the reaction cytidine + ATP = CMP + ADP + H(+). It functions in the pathway pyrimidine metabolism; CTP biosynthesis via salvage pathway; CTP from cytidine: step 1/3. The protein operates within pyrimidine metabolism; UMP biosynthesis via salvage pathway; UMP from uridine: step 1/1. The polypeptide is Uridine kinase (Staphylococcus haemolyticus (strain JCSC1435)).